The chain runs to 382 residues: Mannitol-1-phosphate 5-dehydrogenase (382 aa).

3–14 (ALHFGAGNIGRG) contributes to the NAD(+) binding site. K269 is modified (N6-acetyllysine).

The protein belongs to the mannitol dehydrogenase family.

The enzyme catalyses D-mannitol 1-phosphate + NAD(+) = beta-D-fructose 6-phosphate + NADH + H(+). This Escherichia coli O9:H4 (strain HS) protein is Mannitol-1-phosphate 5-dehydrogenase.